Consider the following 338-residue polypeptide: Mitochondrial glutathione transporter SLC25A40 (338 aa).

Solcar repeat units lie at residues 13-131, 139-223, and 233-327; these read VTPL…LSAL, NETC…LKKW, and PTFM…GKAF. 6 consecutive transmembrane segments (helical) span residues 19–39, 103–123, 142–162, 199–220, 239–259, and 298–318; these read MLAS…LDVV, LWSG…IYFT, CIPI…ISPL, WAPT…YEIL, FTSG…FDVV, and GLFS…AIMI.

The protein belongs to the mitochondrial carrier (TC 2.A.29) family.

The protein resides in the mitochondrion inner membrane. The enzyme catalyses glutathione(in) = glutathione(out). Functionally, probable mitochondrial transporter required for glutathione import into mitochondria. Glutathione, which plays key roles in oxidative metabolism, is produced exclusively in the cytosol and is imported in many organelles. Mitochondrial glutathione is required for the activity and stability of proteins containing iron-sulfur clusters, as well as erythropoiesis. The protein is Mitochondrial glutathione transporter SLC25A40 of Homo sapiens (Human).